The following is a 191-amino-acid chain: Transcription factor FapR (191 aa).

This sequence belongs to the FapR family.

Its function is as follows. Transcriptional factor involved in regulation of membrane lipid biosynthesis by repressing genes involved in fatty acid and phospholipid metabolism. In Oceanobacillus iheyensis (strain DSM 14371 / CIP 107618 / JCM 11309 / KCTC 3954 / HTE831), this protein is Transcription factor FapR.